We begin with the raw amino-acid sequence, 1647 residues long: Putative RNA exonuclease pqe-1 (1647 aa).

Disordered stretches follow at residues 1 to 199 (MFNG…QVQN), 274 to 393 (QTPA…TSLP), 515 to 619 (MMQQ…KPVI), and 641 to 665 (QVKQ…PTAR). 2 stretches are compositionally biased toward low complexity: residues 30–64 (GPSQ…SGAS) and 99–131 (TQPQ…AAAA). Residues 143 to 170 (SREQGNAHQPTAGQIPQSSNQPAQQTHN) are compositionally biased toward polar residues. Low complexity-rich tracts occupy residues 274 to 297 (QTPA…NPQQ) and 515 to 526 (MMQQQAMQMQMQ). A compositionally biased stretch (pro residues) spans 527–540 (NPPPVHQQPPPQQP). Positions 541 to 555 (PQQQRQKQQRSQPAP) are enriched in low complexity. Residues 592-601 (SKIEPVDVKP) show a composition bias toward basic and acidic residues. Positions 650-664 (SSTSDATKSDAAPTA) are enriched in low complexity. The stretch at 686 to 726 (SAKKFERMKAEAEDKEDMKKKIAALQEALFNIQEERRVEKE) forms a coiled coil. Residues 736-756 (AVPQNQPASSVQIAQVSTSES) are compositionally biased toward polar residues. The tract at residues 736-1174 (AVPQNQPASS…LRNKKHTTEE (439 aa)) is disordered. A compositionally biased stretch (low complexity) spans 761-772 (TSEAAATETMTS). The span at 783–793 (TEGEQEEDEDE) shows a compositional bias: acidic residues. A compositionally biased stretch (basic and acidic residues) spans 822 to 833 (RSDEKREKRHVS). Residues 878 to 905 (DNEDDDADSFVVGDDEPIEYEEEDEDDM) are compositionally biased toward acidic residues. The span at 977–992 (TPTASSSMSSSTLSYC) shows a compositional bias: low complexity. Positions 1018–1031 (KTREENRERKRLAQ) are enriched in basic and acidic residues. Over residues 1038-1054 (SETTGVRRTLRSTQDNS) the composition is skewed to polar residues. Basic and acidic residues-rich tracts occupy residues 1076–1088 (AKSS…EKQK) and 1139–1174 (NHTE…TTEE). Residues 1142 to 1187 (EMLDKRNKESEEKRRKDRDELERLRNKKHTTEEEKIKMARLQNALK) adopt a coiled-coil conformation. Residues 1477–1637 (RVYALDCEMV…IFYGLRNPES (161 aa)) form the Exonuclease domain.

This sequence belongs to the REXO1/REXO3 family. As to expression, expressed in the excretory canal, vulval cells, the intestine and in head and tail neurons including ASH, RIC and AIZ neurons.

It localises to the nucleus. Its function is as follows. Putative RNA exonuclease which protects neurons from the toxic effects of expanded poly-Q disease proteins. It is unknown whether this is via participation in the pathogenic mechanism underlying poly-Q-induced neurodegeneration or if it is by acting as a genetic modifier of the age of onset or progression of neurodegeneration. Regulates gene expression in neurons. The sequence is that of Putative RNA exonuclease pqe-1 from Caenorhabditis elegans.